The sequence spans 216 residues: Uracil phosphoribosyltransferase (216 aa).

Residues R84, R109, and 137-145 each bind 5-phospho-alpha-D-ribose 1-diphosphate; that span reads DPMLATGNT. Uracil-binding positions include I202 and 207–209; that span reads GDA. 5-phospho-alpha-D-ribose 1-diphosphate is bound at residue D208.

This sequence belongs to the UPRTase family. Mg(2+) is required as a cofactor.

The catalysed reaction is UMP + diphosphate = 5-phospho-alpha-D-ribose 1-diphosphate + uracil. It functions in the pathway pyrimidine metabolism; UMP biosynthesis via salvage pathway; UMP from uracil: step 1/1. With respect to regulation, allosterically activated by GTP. Its function is as follows. Catalyzes the conversion of uracil and 5-phospho-alpha-D-ribose 1-diphosphate (PRPP) to UMP and diphosphate. This chain is Uracil phosphoribosyltransferase, found in Synechocystis sp. (strain ATCC 27184 / PCC 6803 / Kazusa).